A 754-amino-acid polypeptide reads, in one-letter code: 5-methyltetrahydropteroyltriglutamate--homocysteine methyltransferase (754 aa).

5-methyltetrahydropteroyltri-L-glutamate is bound by residues 17–20 and Lys117; that span reads RELK. L-homocysteine contacts are provided by residues 431 to 433 and Glu484; that span reads IGS. Residues 431–433 and Glu484 contribute to the L-methionine site; that span reads IGS. 5-methyltetrahydropteroyltri-L-glutamate is bound by residues 515–516 and Trp561; that span reads RC. Asp599 is an L-homocysteine binding site. Position 599 (Asp599) interacts with L-methionine. Glu605 provides a ligand contact to 5-methyltetrahydropteroyltri-L-glutamate. Zn(2+) is bound by residues His641, Cys643, and Glu665. Residue His694 is the Proton donor of the active site. Cys726 lines the Zn(2+) pocket.

This sequence belongs to the vitamin-B12 independent methionine synthase family. Zn(2+) is required as a cofactor.

The enzyme catalyses 5-methyltetrahydropteroyltri-L-glutamate + L-homocysteine = tetrahydropteroyltri-L-glutamate + L-methionine. Its pathway is amino-acid biosynthesis; L-methionine biosynthesis via de novo pathway; L-methionine from L-homocysteine (MetE route): step 1/1. Functionally, catalyzes the transfer of a methyl group from 5-methyltetrahydrofolate to homocysteine resulting in methionine formation. This Salmonella paratyphi B (strain ATCC BAA-1250 / SPB7) protein is 5-methyltetrahydropteroyltriglutamate--homocysteine methyltransferase.